The following is a 117-amino-acid chain: UPF0102 protein Spro_4337 (117 aa).

Belongs to the UPF0102 family.

The polypeptide is UPF0102 protein Spro_4337 (Serratia proteamaculans (strain 568)).